Here is a 301-residue protein sequence, read N- to C-terminus: Methionyl-tRNA formyltransferase (301 aa).

(6S)-5,6,7,8-tetrahydrofolate is bound at residue 109–112 (SLLP).

Belongs to the Fmt family.

It carries out the reaction L-methionyl-tRNA(fMet) + (6R)-10-formyltetrahydrofolate = N-formyl-L-methionyl-tRNA(fMet) + (6S)-5,6,7,8-tetrahydrofolate + H(+). Functionally, attaches a formyl group to the free amino group of methionyl-tRNA(fMet). The formyl group appears to play a dual role in the initiator identity of N-formylmethionyl-tRNA by promoting its recognition by IF2 and preventing the misappropriation of this tRNA by the elongation apparatus. The chain is Methionyl-tRNA formyltransferase from Anaplasma marginale (strain St. Maries).